The chain runs to 122 residues: UPF0382 membrane protein SE_0353 (122 aa).

4 consecutive transmembrane segments (helical) span residues Val3–Ala23, Met46–Val66, Ala69–Leu89, and Ile98–Leu118.

It belongs to the UPF0382 family.

It localises to the cell membrane. In Staphylococcus epidermidis (strain ATCC 12228 / FDA PCI 1200), this protein is UPF0382 membrane protein SE_0353.